The sequence spans 151 residues: Small ribosomal subunit protein uS15 (151 aa).

The segment covering 1–16 has biased composition (basic residues); it reads MPHRSRHKKGRSRSVR. The tract at residues 1–21 is disordered; sequence MPHRSRHKKGRSRSVRPAHPT.

This sequence belongs to the universal ribosomal protein uS15 family. In terms of assembly, part of the 30S ribosomal subunit.

This Pyrobaculum islandicum (strain DSM 4184 / JCM 9189 / GEO3) protein is Small ribosomal subunit protein uS15.